The following is a 235-amino-acid chain: Ribonuclease 3 (235 aa).

Residues 6–131 form the RNase III domain; the sequence is IDQLFKLTGH…LIAVMYLDGG (126 aa). Glu-44 is a Mg(2+) binding site. Asp-48 is a catalytic residue. The Mg(2+) site is built by Asp-117 and Glu-120. Residue Glu-120 is part of the active site. Residues 156 to 225 form the DRBM domain; sequence DAKTELQEWA…AEKILRREGV (70 aa).

This sequence belongs to the ribonuclease III family. In terms of assembly, homodimer. Requires Mg(2+) as cofactor.

It localises to the cytoplasm. It carries out the reaction Endonucleolytic cleavage to 5'-phosphomonoester.. Functionally, digests double-stranded RNA. Involved in the processing of primary rRNA transcript to yield the immediate precursors to the large and small rRNAs (23S and 16S). Processes some mRNAs, and tRNAs when they are encoded in the rRNA operon. Processes pre-crRNA and tracrRNA of type II CRISPR loci if present in the organism. This chain is Ribonuclease 3, found in Bartonella tribocorum (strain CIP 105476 / IBS 506).